A 491-amino-acid polypeptide reads, in one-letter code: Lysosomal Pro-X carboxypeptidase (491 aa).

Positions 1 to 17 are cleaved as a signal peptide; it reads MGCRALLLLSFLLLGAA. Residues 18–43 constitute a propeptide that is removed on maturation; it reads TTIPPRLKTLGSPHLSASPTPDPAVA. N99 is a glycosylation site (N-linked (GlcNAc...) asparagine). S177 functions as the Charge relay system in the catalytic mechanism. Residues 192–332 are SKS domain; that stretch reads HIVVGALAAS…QNIFQALSVY (141 aa). Intrachain disulfides connect C213–C370, C231–C308, C262–C341, and C362–C392. N315, N334, and N343 each carry an N-linked (GlcNAc...) asparagine glycan. N413 carries N-linked (GlcNAc...) asparagine glycosylation. Residues D428 and H453 each act as charge relay system in the active site.

This sequence belongs to the peptidase S28 family. Homodimer.

The protein resides in the lysosome. The catalysed reaction is Cleavage of a -Pro-|-Xaa bond to release a C-terminal amino acid.. Functionally, cleaves C-terminal amino acids linked to proline in peptides such as angiotensin II, III and des-Arg9-bradykinin. This cleavage occurs at acidic pH, but enzymatic activity is retained with some substrates at neutral pH. The sequence is that of Lysosomal Pro-X carboxypeptidase (Prcp) from Mus musculus (Mouse).